An 89-amino-acid chain; its full sequence is ATP synthase subunit e, mitochondrial (89 aa).

An N-acetylserine modification is found at Ser1. Residues 8–25 traverse the membrane as a helical segment; that stretch reads YSSLAAGIVYGAYHTYTL.

In terms of assembly, F-type ATP synthases have 2 components, the catalytic core F(1) and the membrane-embedded component F(0), linked together by a central stalk and a peripheral stalk. The central stalk, also called rotor shaft, is often seen as part of F(1). The peripheral stalk is seen as part of F(0). F(0) contains the membrane channel next to the rotor. F-type ATP synthases form dimers but each monomer functions independently in ATP generation. The dimer consists of 18 different polypeptides: ATP1 (subunit alpha, part of F(1), 3 molecules per monomer), ATP2 (subunit beta, part of F(1), 3 molecules per monomer), ATP3 (subunit gamma, part of the central stalk), ATP4 (subunit b, part of the peripheral stalk), ATP5/OSCP (subunit 5/OSCP, part of the peripheral stalk), ATP6 (subunit a, part of the peripheral stalk), ATP7 (subunit d, part of the peripheral stalk), ATP8 (subunit 8, part of the peripheral stalk), OLI1 (subunit c, part of the rotor, 10 molecules per monomer), ATP14 (subunit h, part of the peripheral stalk), ATP15 (subunit epsilon, part of the central stalk), ATP16 (subunit delta, part of the central stalk), ATP17 (subunit f, part of the peripheral stalk), ATP18 (subunit i/j, part of the peripheral stalk). Dimer-specific subunits are ATP19 (subunit k, at interface between monomers), ATP20 (subunit g, at interface between monomers), TIM11 (subunit e, at interface between monomers). Also contains subunit L.

It localises to the mitochondrion inner membrane. In terms of biological role, mitochondrial membrane ATP synthase (F(1)F(0) ATP synthase or Complex V) produces ATP from ADP in the presence of a proton gradient across the membrane which is generated by electron transport complexes of the respiratory chain. F-type ATP synthases consist of two structural domains, F(1) - containing the extramembraneous catalytic core, and F(0) - containing the membrane proton channel, linked together by a central stalk and a peripheral stalk. During catalysis, ATP synthesis in the catalytic domain of F(1) is coupled via a rotary mechanism of the central stalk subunits to proton translocation. Part of the complex F(0) domain. Minor subunit located with subunit a/ATP6 in the membrane. Together with subunit g/ATP20, probably contributes to membrane curvature at the site of the ATP synthase dimer, ultimately contributing to formation of cristae. The chain is ATP synthase subunit e, mitochondrial from Pichia angusta (Yeast).